The chain runs to 343 residues: Major outer membrane protein (343 aa).

An N-terminal signal peptide occupies residues 1–20 (MKKTIVALAVAAVAATSANA).

Disulfide bond interactions within and between MOMP molecules and other components form high molecular-weight oligomers.

It is found in the cell outer membrane. Its function is as follows. Structural rigidity of the outer membrane of elementary bodies and porin forming, permitting diffusion of solutes through the intracellular reticulate body membrane. The protein is Major outer membrane protein (ompH) of Pasteurella multocida.